We begin with the raw amino-acid sequence, 529 residues long: G-protein coupled receptor 161 (529 aa).

Topologically, residues 1 to 30 (MSLNSSLSCRKELSNLTEEEGGEGGVIITQ) are extracellular. N-linked (GlcNAc...) asparagine glycans are attached at residues N4 and N15. Residues 31–51 (FIAIIVITIFVCLGNLVIVVT) form a helical membrane-spanning segment. Over 52–64 (LYKKSYLLTLSNK) the chain is Cytoplasmic. Residues 65-85 (FVFSLTLSNFLLSVLVLPFVV) form a helical membrane-spanning segment. Residues 86-101 (TSSIRREWIFGVVWCN) are Extracellular-facing. C100 and C178 are joined by a disulfide. The chain crosses the membrane as a helical span at residues 102-123 (FSALLYLLISSASMLTLGVIAI). Topologically, residues 124-143 (DRYYAVLYPMVYPMKITGNR) are cytoplasmic. Residues 144-164 (AVMALVYIWLHSLIGCLPPLF) traverse the membrane as a helical segment. Residues 165–190 (GWSSVEFDEFKWMCVAAWHREPGYTA) are Extracellular-facing. Residues 191–211 (FWQIWCALFPFLVMLVCYGFI) form a helical membrane-spanning segment. The Cytoplasmic portion of the chain corresponds to 212 to 269 (FRVARVKARKVHCGTVVIVEEDAQRTGRKNSSTSTSSSGSRRNAFQGVVYSANQCKAL). The helical transmembrane segment at 270–290 (ITILVVLGAFMVTWGPYMVVI) threads the bilayer. The Extracellular segment spans residues 291 to 306 (ASEALWGKSSVSPSLE). A helical membrane pass occupies residues 307–327 (TWATWLSFASAVCHPLIYGLW). Over 328–529 (NKTVRKELLG…EGDVLAAEQR (202 aa)) the chain is Cytoplasmic.

Belongs to the G-protein coupled receptor 1 family.

The protein resides in the cell projection. It is found in the cilium membrane. The protein localises to the cell membrane. Its function is as follows. Key negative regulator of Shh signaling, which promotes the processing of GLI3 into GLI3R during neural tube development. Recruited by TULP3 and the IFT-A complex to primary cilia and acts as a regulator of the PKA-dependent basal repression machinery in Shh signaling by increasing cAMP levels, leading to promote the PKA-dependent processing of GLI3 into GLI3R and repress the Shh signaling. In presence of SHH, it is removed from primary cilia and is internalized into recycling endosomes, preventing its activity and allowing activation of the Shh signaling. Its ligand is unknown. The chain is G-protein coupled receptor 161 (GPR161) from Homo sapiens (Human).